Consider the following 153-residue polypeptide: Large ribosomal subunit protein uL15 (153 aa).

Residues 1-40 (MTDKKRRQRGSRTHGGGTHKNRRGAGNRGGRGRAGRKKHE) are compositionally biased toward basic residues. The interval 1 to 60 (MTDKKRRQRGSRTHGGGTHKNRRGAGNRGGRGRAGRKKHEQHNYEDVGKSGFKRPEKTDR) is disordered. Residues 41–60 (QHNYEDVGKSGFKRPEKTDR) are compositionally biased toward basic and acidic residues.

Belongs to the universal ribosomal protein uL15 family. In terms of assembly, part of the 50S ribosomal subunit.

Its function is as follows. Binds to the 23S rRNA. The sequence is that of Large ribosomal subunit protein uL15 from Halobacterium salinarum (strain ATCC 29341 / DSM 671 / R1).